The following is a 219-amino-acid chain: Beta-crystallin B2 (219 aa).

Residue alanine 2 is modified to N-acetylalanine. Residues 2–16 (ASEHQMPASKQQPAS) are N-terminal arm. Beta/gamma crystallin 'Greek key' domains follow at residues 17–56 (PNIA…LVHS) and 57–101 (GPWV…RPIK). The segment at 102–120 (VVRAPRQPLPTRQTKDSQE) is connecting peptide. Beta/gamma crystallin 'Greek key' domains are found at residues 121-162 (HKIV…RVQS) and 163-205 (GTWV…RRIR). A C-terminal arm region spans residues 207–219 (MQWHQRGAYHPSN).

It belongs to the beta/gamma-crystallin family. As to quaternary structure, homo/heterodimer, or complexes of higher-order. The structure of beta-crystallin oligomers seems to be stabilized through interactions between the N-terminal arms.

Functionally, crystallins are the dominant structural components of the vertebrate eye lens. This chain is Beta-crystallin B2 (CRYBB2), found in Gallus gallus (Chicken).